The following is a 121-amino-acid chain: Large ribosomal subunit protein uL14 (121 aa).

The protein belongs to the universal ribosomal protein uL14 family. Part of the 50S ribosomal subunit. Forms a cluster with proteins L3 and L19. In the 70S ribosome, L14 and L19 interact and together make contacts with the 16S rRNA in bridges B5 and B8.

Its function is as follows. Binds to 23S rRNA. Forms part of two intersubunit bridges in the 70S ribosome. The protein is Large ribosomal subunit protein uL14 of Prochlorococcus marinus (strain MIT 9301).